A 1036-amino-acid polypeptide reads, in one-letter code: Vacuolar basic amino acid transporter VSB1 (1036 aa).

Topologically, residues 1-213 are vacuolar; that stretch reads MGRTIRRRRS…SKFAHYLPAA (213 aa). Ser-42 and Ser-127 each carry phosphoserine. Thr-130 carries the phosphothreonine modification. Ser-140, Ser-144, Ser-149, Ser-152, and Ser-153 each carry phosphoserine. The helical transmembrane segment at 214–234 threads the bilayer; sequence VLGLLLNILDALSYGMIIFPI. Residues 235-236 are Cytoplasmic-facing; that stretch reads TE. Residues 237–257 form a helical membrane-spanning segment; it reads PVFSHLGPTGISMFYISTIIS. Residues 258–269 are Vacuolar-facing; it reads QAVYSGGWSSFP. The chain crosses the membrane as a helical span at residues 270–290; that stretch reads SGIGSEMIEITPFYHTMALAI. The Cytoplasmic segment spans residues 291 to 300; sequence KEALAGNDDE. The chain crosses the membrane as a helical span at residues 301–321; that stretch reads IITTTIFCYVISSMLTGVVFY. At 322 to 338 the chain is on the vacuolar side; the sequence is ALGKLRLGKIVGFFPRH. Residues 339–359 traverse the membrane as a helical segment; the sequence is ILIGCIGGVGYFLIITGIEVT. Topologically, residues 360-375 are cytoplasmic; the sequence is TRVAKFEYSWPFFSGL. The helical transmembrane segment at 376–396 threads the bilayer; sequence FTDYDTLAKWLLPVLLTVVLI. At 397 to 405 the chain is on the vacuolar side; it reads GTQRYFKNS. The helical transmembrane segment at 406-426 threads the bilayer; it reads LVLPSFYILTLVLFHFIVAII. Topologically, residues 427 to 473 are cytoplasmic; sequence PTLSLDALRQAGWIFPIANSDSKWYDHYRLFNVHKVHWSLVLQQIPT. The chain crosses the membrane as a helical span at residues 474-494; that stretch reads MMALTFFGILHVPINVPALAM. The Vacuolar segment spans residues 495 to 515; sequence SLQMDKYDVDRELIAHGYSNF. Residues 516–536 traverse the membrane as a helical segment; sequence FSGLLGSVQNYLVYTNSVLFI. Residues 537–546 are Cytoplasmic-facing; sequence RAGADSPFAG. Residues 547 to 567 traverse the membrane as a helical segment; it reads FLLIALTICIMIIGPVIISFI. Position 568 (Pro-568) is a topological domain, vacuolar. A helical membrane pass occupies residues 569-589; that stretch reads ICIVGSLIFLLGYELLVEALV. At 590–604 the chain is on the cytoplasmic side; it reads DTWNKLNRFEYLTVV. A helical transmembrane segment spans residues 605-625; sequence IIVFTMGIFDFVLGIIVGILI. Residues 626 to 664 are Vacuolar-facing; it reads ACFSFLVDSTKLQTINGEYNGNVARSTVYRDYVQTKFLD. One can recognise an STAS domain in the interval 660-781; the sequence is TKFLDGIGEQ…ADLNSALEWC (122 aa). Residues 665-685 traverse the membrane as a helical segment; the sequence is GIGEQIYVLKLQNLLFFGTII. Over 686–1036 the chain is Cytoplasmic; it reads SIEEKIERLL…ELLGYTLVSA (351 aa). Ser-842 bears the Phosphoserine mark. Thr-847 bears the Phosphothreonine mark.

It is found in the vacuole membrane. Amino acid transporter involved in vacuolar uptake of basic amino acids for storage during nitrogen replete condititions. May function as an amino acid/proton antiporter. The protein is Vacuolar basic amino acid transporter VSB1 of Saccharomyces cerevisiae (strain ATCC 204508 / S288c) (Baker's yeast).